The chain runs to 135 residues: Large ribosomal subunit protein bL19 (135 aa).

It belongs to the bacterial ribosomal protein bL19 family.

Functionally, this protein is located at the 30S-50S ribosomal subunit interface and may play a role in the structure and function of the aminoacyl-tRNA binding site. This is Large ribosomal subunit protein bL19 from Xanthomonas euvesicatoria pv. vesicatoria (strain 85-10) (Xanthomonas campestris pv. vesicatoria).